The sequence spans 233 residues: Large ribosomal subunit protein uL1 (233 aa).

The protein belongs to the universal ribosomal protein uL1 family. As to quaternary structure, part of the 50S ribosomal subunit.

In terms of biological role, binds directly to 23S rRNA. Forms the L1 stalk. Unlike the case in the Thermus thermophilus 70S ribosome, this protein is not seen to block the exit path of the E site tRNA. It is clear that the protein in the structure is flexible however, so this is probably due to its position in these crystals. Functionally, protein L1 is also a translational repressor protein, it controls the translation of the L11 operon by binding to its mRNA. The sequence is that of Large ribosomal subunit protein uL1 (rplA) from Deinococcus radiodurans (strain ATCC 13939 / DSM 20539 / JCM 16871 / CCUG 27074 / LMG 4051 / NBRC 15346 / NCIMB 9279 / VKM B-1422 / R1).